We begin with the raw amino-acid sequence, 507 residues long: Type II methyltransferase M.PstI (507 aa).

It belongs to the N(4)/N(6)-methyltransferase family. In terms of assembly, monomer.

The enzyme catalyses a 2'-deoxyadenosine in DNA + S-adenosyl-L-methionine = an N(6)-methyl-2'-deoxyadenosine in DNA + S-adenosyl-L-homocysteine + H(+). Functionally, a gamma subtype methylase that recognizes the double-stranded sequence 5'-CTGCAG-3', methylates A-5 on both strands, and protects the DNA from cleavage by the PstI endonuclease. This chain is Type II methyltransferase M.PstI (pstIM), found in Providencia stuartii.